The following is a 599-amino-acid chain: MKYIRNFSIIAHVNHGKSTLSDRFIQICGGLCDREMMSQVLDSMELERERGITIKSQSVTLNYRSRSNEQFYQLNLIDTPGHVDFSYEVSRALAACEGAVLVVDAAQGIEAQTVANYRIAMERDLKVIIALNKIDLLTADINRVSKEIEEIIGINSNDIILCSAKTGLGVLDILERIIIDIPVPQGNCDAPLQALIIDSWFNNYLGVISLICVKNGILHKGDTIQSMNTGQIYIVNQLGIFTPKQVQRMSLNCGEVGWLVYTSKNHRVMGAPVGDTLTLLINPAQKSLPNFKKIQPYVYAGLFPAGSTSQKVFADALYKLSLNDSSLHYESEYSEYLGLGFRCGFLGLLHMEIIQERLKREYAIDLIITTPGVMYEVLVVDDQIIYVDNPLKLLSITGIKEIREPIVLCNFLMPKKYLGEIIVLCVEKRGVQVSLVYKADQVMLTYELPMSEIILDFFDRMKSISNGYASLEYTFNRFQASDMVCIEILINGQRVNALAVIVHRITAEFQGRILVNKLKSLILRQQFDIVIQAVIGKRVICRDVIKQLRKNVTHKCYGGDVTRKKKLLHNQKIGKKRMKQVGKVNLPNSVFMSILNRDS.

The tr-type G domain occupies 2–185; it reads KYIRNFSIIA…RIIIDIPVPQ (184 aa). GTP contacts are provided by residues 14–19 and 132–135; these read NHGKST and NKID.

It belongs to the TRAFAC class translation factor GTPase superfamily. Classic translation factor GTPase family. LepA subfamily.

The protein resides in the cell inner membrane. The catalysed reaction is GTP + H2O = GDP + phosphate + H(+). Required for accurate and efficient protein synthesis under certain stress conditions. May act as a fidelity factor of the translation reaction, by catalyzing a one-codon backward translocation of tRNAs on improperly translocated ribosomes. Back-translocation proceeds from a post-translocation (POST) complex to a pre-translocation (PRE) complex, thus giving elongation factor G a second chance to translocate the tRNAs correctly. Binds to ribosomes in a GTP-dependent manner. This is Elongation factor 4 from Blochmanniella floridana.